Consider the following 281-residue polypeptide: Ribosomal RNA small subunit methyltransferase J (281 aa).

S-adenosyl-L-methionine contacts are provided by residues Arg129–Asp130, Glu145–Arg146, and Asp199.

This sequence belongs to the methyltransferase superfamily. RsmJ family.

The protein resides in the cytoplasm. It carries out the reaction guanosine(1516) in 16S rRNA + S-adenosyl-L-methionine = N(2)-methylguanosine(1516) in 16S rRNA + S-adenosyl-L-homocysteine + H(+). Its function is as follows. Specifically methylates the guanosine in position 1516 of 16S rRNA. The polypeptide is Ribosomal RNA small subunit methyltransferase J (Laribacter hongkongensis (strain HLHK9)).